The following is a 119-amino-acid chain: Beta-2-microglobulin (119 aa).

The N-terminal stretch at 1–20 (MACSVVVALLALLSLSGLEA) is a signal peptide. Residues 25 to 114 (PKIQVYSRHP…VTFSTPKTVK (90 aa)) form the Ig-like C1-type domain. A disulfide bridge links cysteine 45 with cysteine 100.

It belongs to the beta-2-microglobulin family. Heterodimer of an alpha chain and a beta chain. Beta-2-microglobulin is the beta-chain of major histocompatibility complex class I molecules.

It is found in the secreted. Functionally, component of the class I major histocompatibility complex (MHC). Involved in the presentation of peptide antigens to the immune system. The polypeptide is Beta-2-microglobulin (B2M) (Mico emiliae (Emilia's marmoset)).